Reading from the N-terminus, the 473-residue chain is Zinc finger and SCAN domain-containing protein 21 (473 aa).

Lysine 27 participates in a covalent cross-link: Glycyl lysine isopeptide (Lys-Gly) (interchain with G-Cter in SUMO2). The 83-residue stretch at 45-127 folds into the SCAN box domain; it reads RQRFRQFGYH…TLLEDLEREL (83 aa). Positions 127 to 169 are disordered; the sequence is LDEPGHQVSTPPNEQKPVWEKISSSGTAKESPSSMQPQPLETS. A compositionally biased stretch (polar residues) spans 148–167; sequence ISSSGTAKESPSSMQPQPLE. Residues lysine 221 and lysine 232 each participate in a glycyl lysine isopeptide (Lys-Gly) (interchain with G-Cter in SUMO2) cross-link. Residues 244 to 272 form a disordered region; it reads LENEKGTKPPLQEAGSKKGRESVPTKPTP. Basic and acidic residues predominate over residues 258–272; the sequence is GSKKGRESVPTKPTP. 7 consecutive C2H2-type zinc fingers follow at residues 277 to 299, 305 to 327, 333 to 354, 360 to 382, 388 to 410, 416 to 438, and 444 to 466; these read YICA…RRTH, YVCT…YRTH, YDCK…QRMH, YQCK…YRIH, YQCN…QRLH, YKCK…HRIH, and YWCH…QRVH. Residue lysine 349 forms a Glycyl lysine isopeptide (Lys-Gly) (interchain with G-Cter in SUMO2) linkage.

It belongs to the krueppel C2H2-type zinc-finger protein family.

The protein localises to the nucleus. In terms of biological role, strong transcriptional activator. Plays an important role in spermatogenesis; essential for the progression of meiotic prophase I in spermatocytes. This is Zinc finger and SCAN domain-containing protein 21 (ZSCAN21) from Homo sapiens (Human).